The chain runs to 226 residues: Leucyl/phenylalanyl-tRNA--protein transferase (226 aa).

This sequence belongs to the L/F-transferase family.

Its subcellular location is the cytoplasm. The enzyme catalyses N-terminal L-lysyl-[protein] + L-leucyl-tRNA(Leu) = N-terminal L-leucyl-L-lysyl-[protein] + tRNA(Leu) + H(+). It catalyses the reaction N-terminal L-arginyl-[protein] + L-leucyl-tRNA(Leu) = N-terminal L-leucyl-L-arginyl-[protein] + tRNA(Leu) + H(+). It carries out the reaction L-phenylalanyl-tRNA(Phe) + an N-terminal L-alpha-aminoacyl-[protein] = an N-terminal L-phenylalanyl-L-alpha-aminoacyl-[protein] + tRNA(Phe). Functions in the N-end rule pathway of protein degradation where it conjugates Leu, Phe and, less efficiently, Met from aminoacyl-tRNAs to the N-termini of proteins containing an N-terminal arginine or lysine. This Ectopseudomonas mendocina (strain ymp) (Pseudomonas mendocina) protein is Leucyl/phenylalanyl-tRNA--protein transferase.